A 427-amino-acid polypeptide reads, in one-letter code: Glutamate-1-semialdehyde 2,1-aminomutase (427 aa).

Lysine 265 bears the N6-(pyridoxal phosphate)lysine mark.

It belongs to the class-III pyridoxal-phosphate-dependent aminotransferase family. HemL subfamily. As to quaternary structure, homodimer. The cofactor is pyridoxal 5'-phosphate.

It localises to the cytoplasm. The catalysed reaction is (S)-4-amino-5-oxopentanoate = 5-aminolevulinate. It participates in porphyrin-containing compound metabolism; protoporphyrin-IX biosynthesis; 5-aminolevulinate from L-glutamyl-tRNA(Glu): step 2/2. The polypeptide is Glutamate-1-semialdehyde 2,1-aminomutase (Pseudomonas aeruginosa (strain LESB58)).